Here is a 331-residue protein sequence, read N- to C-terminus: Biotin synthase (331 aa).

A Radical SAM core domain is found at 52–277; it reads PEVEVEGIVS…RTILRYAGGR (226 aa). [4Fe-4S] cluster is bound by residues Cys-67, Cys-71, and Cys-74. Residues Cys-110, Cys-202, and Arg-272 each coordinate [2Fe-2S] cluster.

Belongs to the radical SAM superfamily. Biotin synthase family. In terms of assembly, homodimer. [4Fe-4S] cluster serves as cofactor. [2Fe-2S] cluster is required as a cofactor.

The enzyme catalyses (4R,5S)-dethiobiotin + (sulfur carrier)-SH + 2 reduced [2Fe-2S]-[ferredoxin] + 2 S-adenosyl-L-methionine = (sulfur carrier)-H + biotin + 2 5'-deoxyadenosine + 2 L-methionine + 2 oxidized [2Fe-2S]-[ferredoxin]. It participates in cofactor biosynthesis; biotin biosynthesis; biotin from 7,8-diaminononanoate: step 2/2. In terms of biological role, catalyzes the conversion of dethiobiotin (DTB) to biotin by the insertion of a sulfur atom into dethiobiotin via a radical-based mechanism. This chain is Biotin synthase, found in Salinispora arenicola (strain CNS-205).